The primary structure comprises 391 residues: UPF0229 protein BCG9842_B4751 (391 aa).

Residues 1-16 are compositionally biased toward polar residues; sequence MGEENQPNYTISQENW. Disordered regions lie at residues 1 to 31 and 80 to 117; these read MGEE…RHQE and HVGQ…GDAA. Positions 21–31 are enriched in basic and acidic residues; the sequence is KGYDDQQRHQE. Residues 98–115 are compositionally biased toward gly residues; it reads GSGGQKQKGPGKGQGAGD.

The protein belongs to the UPF0229 family.

The chain is UPF0229 protein BCG9842_B4751 from Bacillus cereus (strain G9842).